The sequence spans 122 residues: Large ribosomal subunit protein uL14 (122 aa).

The protein belongs to the universal ribosomal protein uL14 family. Part of the 50S ribosomal subunit. Forms a cluster with proteins L3 and L19. In the 70S ribosome, L14 and L19 interact and together make contacts with the 16S rRNA in bridges B5 and B8.

Binds to 23S rRNA. Forms part of two intersubunit bridges in the 70S ribosome. This Chlamydia caviae (strain ATCC VR-813 / DSM 19441 / 03DC25 / GPIC) (Chlamydophila caviae) protein is Large ribosomal subunit protein uL14.